A 271-amino-acid chain; its full sequence is Mannosyl-3-phosphoglycerate phosphatase (271 aa).

D13 serves as the catalytic Nucleophile. D13, D15, and D214 together coordinate Mg(2+).

This sequence belongs to the HAD-like hydrolase superfamily. MPGP family. The cofactor is Mg(2+).

It is found in the cytoplasm. It catalyses the reaction 2-O-(alpha-D-mannosyl)-3-phosphoglycerate + H2O = (2R)-2-O-(alpha-D-mannosyl)-glycerate + phosphate. The sequence is that of Mannosyl-3-phosphoglycerate phosphatase (yedP) from Escherichia coli O157:H7.